Reading from the N-terminus, the 343-residue chain is Uroporphyrinogen decarboxylase (343 aa).

Substrate contacts are provided by residues Arg-25–Arg-29, Asp-75, Tyr-152, Ser-207, and His-323.

This sequence belongs to the uroporphyrinogen decarboxylase family. In terms of assembly, homodimer.

The protein resides in the cytoplasm. It catalyses the reaction uroporphyrinogen III + 4 H(+) = coproporphyrinogen III + 4 CO2. It participates in porphyrin-containing compound metabolism; protoporphyrin-IX biosynthesis; coproporphyrinogen-III from 5-aminolevulinate: step 4/4. Catalyzes the decarboxylation of four acetate groups of uroporphyrinogen-III to yield coproporphyrinogen-III. The protein is Uroporphyrinogen decarboxylase of Jannaschia sp. (strain CCS1).